A 518-amino-acid chain; its full sequence is ATP synthase subunit alpha (518 aa).

169–176 is an ATP binding site; that stretch reads GDRKTGKT.

This sequence belongs to the ATPase alpha/beta chains family. In terms of assembly, F-type ATPases have 2 components, CF(1) - the catalytic core - and CF(0) - the membrane proton channel. CF(1) has five subunits: alpha(3), beta(3), gamma(1), delta(1), epsilon(1). CF(0) has three main subunits: a(1), b(2) and c(9-12). The alpha and beta chains form an alternating ring which encloses part of the gamma chain. CF(1) is attached to CF(0) by a central stalk formed by the gamma and epsilon chains, while a peripheral stalk is formed by the delta and b chains.

It localises to the cell membrane. The catalysed reaction is ATP + H2O + 4 H(+)(in) = ADP + phosphate + 5 H(+)(out). Produces ATP from ADP in the presence of a proton gradient across the membrane. The alpha chain is a regulatory subunit. The polypeptide is ATP synthase subunit alpha (Enterococcus faecalis (strain ATCC 700802 / V583)).